Reading from the N-terminus, the 417-residue chain is Serine--tRNA ligase (417 aa).

224-226 (TSE) contacts L-serine. Residues 255-257 (RRE) and Val271 each bind ATP. Glu278 contacts L-serine. 342–345 (ELTS) serves as a coordination point for ATP. Thr377 is a binding site for L-serine.

This sequence belongs to the class-II aminoacyl-tRNA synthetase family. Type-1 seryl-tRNA synthetase subfamily. Homodimer. The tRNA molecule binds across the dimer.

It localises to the cytoplasm. The enzyme catalyses tRNA(Ser) + L-serine + ATP = L-seryl-tRNA(Ser) + AMP + diphosphate + H(+). The catalysed reaction is tRNA(Sec) + L-serine + ATP = L-seryl-tRNA(Sec) + AMP + diphosphate + H(+). Its pathway is aminoacyl-tRNA biosynthesis; selenocysteinyl-tRNA(Sec) biosynthesis; L-seryl-tRNA(Sec) from L-serine and tRNA(Sec): step 1/1. Catalyzes the attachment of serine to tRNA(Ser). Is also able to aminoacylate tRNA(Sec) with serine, to form the misacylated tRNA L-seryl-tRNA(Sec), which will be further converted into selenocysteinyl-tRNA(Sec). The sequence is that of Serine--tRNA ligase from Mycobacterium leprae (strain TN).